The sequence spans 278 residues: Pantothenate synthetase (278 aa).

Residue 30-37 participates in ATP binding; sequence MGGLHQGH. Catalysis depends on H37, which acts as the Proton donor. Q61 contributes to the (R)-pantoate binding site. Q61 is a binding site for beta-alanine. An ATP-binding site is contributed by 146 to 149; that stretch reads GQKD. Q152 contributes to the (R)-pantoate binding site. ATP is bound by residues I175 and 183-186; that span reads MSTR.

It belongs to the pantothenate synthetase family. As to quaternary structure, homodimer.

Its subcellular location is the cytoplasm. It catalyses the reaction (R)-pantoate + beta-alanine + ATP = (R)-pantothenate + AMP + diphosphate + H(+). It functions in the pathway cofactor biosynthesis; (R)-pantothenate biosynthesis; (R)-pantothenate from (R)-pantoate and beta-alanine: step 1/1. Functionally, catalyzes the condensation of pantoate with beta-alanine in an ATP-dependent reaction via a pantoyl-adenylate intermediate. The sequence is that of Pantothenate synthetase from Ruthia magnifica subsp. Calyptogena magnifica.